A 207-amino-acid polypeptide reads, in one-letter code: Outer-membrane lipoprotein carrier protein (207 aa).

An N-terminal signal peptide occupies residues 1–21 (MRLFRVLLLSAVAFALSPAQA).

This sequence belongs to the LolA family. In terms of assembly, monomer.

The protein localises to the periplasm. Functionally, participates in the translocation of lipoproteins from the inner membrane to the outer membrane. Only forms a complex with a lipoprotein if the residue after the N-terminal Cys is not an aspartate (The Asp acts as a targeting signal to indicate that the lipoprotein should stay in the inner membrane). The protein is Outer-membrane lipoprotein carrier protein of Azotobacter vinelandii (strain DJ / ATCC BAA-1303).